We begin with the raw amino-acid sequence, 235 residues long: Succinate dehydrogenase iron-sulfur subunit (235 aa).

3 residues coordinate [2Fe-2S] cluster: C53, C58, and C73. Residues 133-163 enclose the 4Fe-4S ferredoxin-type domain; that stretch reads ERAKLDGLYECILCACCSSSCPSYWWNPDKF. [4Fe-4S] cluster-binding residues include C143, C146, and C149. C153 contributes to the [3Fe-4S] cluster binding site. A ubiquinone is bound at residue W158. [3Fe-4S] cluster contacts are provided by C200 and C206. C210 provides a ligand contact to [4Fe-4S] cluster.

The protein belongs to the succinate dehydrogenase/fumarate reductase iron-sulfur protein family. Part of an enzyme complex containing four subunits: a flavoprotein, an iron-sulfur protein, cytochrome b-556 and a hydrophobic protein. [2Fe-2S] cluster serves as cofactor. The cofactor is [3Fe-4S] cluster. [4Fe-4S] cluster is required as a cofactor.

The catalysed reaction is a quinone + succinate = fumarate + a quinol. It functions in the pathway carbohydrate metabolism; tricarboxylic acid cycle; fumarate from succinate (bacterial route): step 1/1. The chain is Succinate dehydrogenase iron-sulfur subunit (sdhB) from Coxiella burnetii (strain RSA 493 / Nine Mile phase I).